A 246-amino-acid polypeptide reads, in one-letter code: Small ribosomal subunit protein uS2 (246 aa).

It belongs to the universal ribosomal protein uS2 family.

The sequence is that of Small ribosomal subunit protein uS2 from Burkholderia vietnamiensis (strain G4 / LMG 22486) (Burkholderia cepacia (strain R1808)).